A 391-amino-acid polypeptide reads, in one-letter code: Elongation factor Tu (391 aa).

The 192-residue stretch at 10 to 201 (KPHVNIGTIG…AVDEYIPTPA (192 aa)) folds into the tr-type G domain. A G1 region spans residues 19-26 (GHVDHGKT). 19 to 26 (GHVDHGKT) contacts GTP. Thr26 contributes to the Mg(2+) binding site. Positions 55-59 (GITIS) are G2. The segment at 76–79 (DCPG) is G3. GTP-binding positions include 76-80 (DCPGH) and 131-134 (NKVD). Residues 131 to 134 (NKVD) form a G4 region. Residues 169 to 171 (SAL) are G5.

It belongs to the TRAFAC class translation factor GTPase superfamily. Classic translation factor GTPase family. EF-Tu/EF-1A subfamily. As to quaternary structure, monomer.

It is found in the cytoplasm. The enzyme catalyses GTP + H2O = GDP + phosphate + H(+). In terms of biological role, GTP hydrolase that promotes the GTP-dependent binding of aminoacyl-tRNA to the A-site of ribosomes during protein biosynthesis. The protein is Elongation factor Tu of Cereibacter sphaeroides (strain ATCC 17029 / ATH 2.4.9) (Rhodobacter sphaeroides).